A 220-amino-acid polypeptide reads, in one-letter code: Peptidyl-tRNA hydrolase (220 aa).

Tyr14 is a tRNA binding site. The active-site Proton acceptor is His19. TRNA contacts are provided by Phe60, Asn62, and Asn106.

Belongs to the PTH family. Monomer.

Its subcellular location is the cytoplasm. The enzyme catalyses an N-acyl-L-alpha-aminoacyl-tRNA + H2O = an N-acyl-L-amino acid + a tRNA + H(+). Its function is as follows. Hydrolyzes ribosome-free peptidyl-tRNAs (with 1 or more amino acids incorporated), which drop off the ribosome during protein synthesis, or as a result of ribosome stalling. Functionally, catalyzes the release of premature peptidyl moieties from peptidyl-tRNA molecules trapped in stalled 50S ribosomal subunits, and thus maintains levels of free tRNAs and 50S ribosomes. The protein is Peptidyl-tRNA hydrolase of Campylobacter hominis (strain ATCC BAA-381 / DSM 21671 / CCUG 45161 / LMG 19568 / NCTC 13146 / CH001A).